The sequence spans 143 residues: Transcriptional regulator MraZ (143 aa).

SpoVT-AbrB domains lie at 5–47 (TFTP…PREE) and 76–119 (ADEQ…DAQA).

The protein belongs to the MraZ family. Forms oligomers.

The protein resides in the cytoplasm. It is found in the nucleoid. The sequence is that of Transcriptional regulator MraZ from Corynebacterium urealyticum (strain ATCC 43042 / DSM 7109).